The following is a 154-amino-acid chain: Protein X (154 aa).

The disordered stretch occupies residues 28–50 (RPLPGPLGAVPPSSPSAVPADDG). The segment covering 33 to 48 (PLGAVPPSSPSAVPAD) has biased composition (low complexity). The interval 68-117 (PCALRFTSARRMETTVNAPWSLPTVLHKRTLGLSGWSMTWIEEYIKDCVF) is mitochondrial targeting sequence.

This sequence belongs to the orthohepadnavirus protein X family. In terms of assembly, may form homodimer. May interact with host CEBPA, CFLAR, CREB1, DDB1, E4F1, HBXIP, HSPD1/HSP60, NFKBIA, POLR2E and SMAD4. Interacts with host SMC5-SMC6 complex and induces its degradation. Interacts with host TRPC4AP; leading to prevent ubiquitination of TRPC4AP. Interacts with host PLSCR1; this interaction promotes ubiquitination and degradation of HBx and impairs HBx-mediated cell proliferation. Post-translationally, a fraction may be phosphorylated in insect cells and HepG2 cells, a human hepatoblastoma cell line. Phosphorylated in vitro by host protein kinase C or mitogen-activated protein kinase. N-acetylated in insect cells.

The protein localises to the host cytoplasm. It localises to the host nucleus. It is found in the host mitochondrion. Its function is as follows. Multifunctional protein that plays a role in silencing host antiviral defenses and promoting viral transcription. Does not seem to be essential for HBV infection. May be directly involved in development of cirrhosis and liver cancer (hepatocellular carcinoma). Most of cytosolic activities involve modulation of cytosolic calcium. The effect on apoptosis is controversial depending on the cell types in which the studies have been conducted. May induce apoptosis by localizing in mitochondria and causing loss of mitochondrial membrane potential. May also modulate apoptosis by binding host CFLAR, a key regulator of the death-inducing signaling complex (DISC). Promotes viral transcription by using the host E3 ubiquitin ligase DDB1 to target the SMC5-SMC6 complex to proteasomal degradation. This host complex would otherwise bind to viral episomal DNA, and prevents its transcription. Moderately stimulates transcription of many different viral and cellular transcription elements. Promoters and enhancers stimulated by HBx contain DNA binding sites for NF-kappa-B, AP-1, AP-2, c-EBP, ATF/CREB, or the calcium-activated factor NF-AT. This Homo sapiens (Human) protein is Protein X.